Here is a 301-residue protein sequence, read N- to C-terminus: Protoheme IX farnesyltransferase (301 aa).

Transmembrane regions (helical) follow at residues 20 to 42 (FTEL…GMWL), 55 to 75 (VDVI…SGAF), 105 to 125 (ALMV…MTTW), 126 to 146 (QAGV…SLYA), 150 to 172 (LVSN…WFAV), 176 to 198 (FSIV…FYAI), 227 to 247 (MFFW…LGIV), 249 to 269 (VILA…GFKM), and 280 to 300 (FVYS…ISIF).

This sequence belongs to the UbiA prenyltransferase family. Protoheme IX farnesyltransferase subfamily. Interacts with CtaA.

It localises to the cell membrane. It carries out the reaction heme b + (2E,6E)-farnesyl diphosphate + H2O = Fe(II)-heme o + diphosphate. The protein operates within porphyrin-containing compound metabolism; heme O biosynthesis; heme O from protoheme: step 1/1. Functionally, converts heme B (protoheme IX) to heme O by substitution of the vinyl group on carbon 2 of heme B porphyrin ring with a hydroxyethyl farnesyl side group. This Listeria monocytogenes serovar 1/2a (strain ATCC BAA-679 / EGD-e) protein is Protoheme IX farnesyltransferase.